The sequence spans 249 residues: Spindlin-4 (249 aa).

Tudor-like domain stretches follow at residues 41–90 (VGCR…LELH), 119–168 (VGKA…YTLL), and 201–246 (VGKQ…YGLV). Histone H3K4me3 and H3R8me2a binding regions lie at residues 80 to 85 (GKDSVY), Glu128, and 237 to 239 (DIH).

This sequence belongs to the SPIN/STSY family. As to quaternary structure, interacts with C11orf84/SPINDOC. Associates with chromatin.

Its subcellular location is the cytoplasm. It localises to the nucleus. Its function is as follows. Binds to acetylated and methylated histones, including H3K4me3 and H4K20me3, probably acting as a histone reader that recognizes chromatin marks to mediate downstream cellular effects. Promotes canonical WNT signaling, and is involved in the down-regulation of cell proliferation. The sequence is that of Spindlin-4 (Spin4) from Mus musculus (Mouse).